The chain runs to 317 residues: MGEVQREKVAVIIGPTAVGKTKLSIDLAKALNGEIISGDSMQIYRTMDIGTAKVTKEEMDGIPHYMVDIKNPEESFSVAEFQERVRKHIREITERGKLPIIVGGTGLYIQSVLFDYQFTDDAGDVIYREHMEKLALERGVEYVHKKLQEVDPESAERIHANNVRRVIRALEIFHTTGEKMSDQLEKQENELLYDVSLIGLTMDREMLYDRINLRVDIMMDQGLLEEVEGLYNRGIRDCQSIQAIGYKEIYDYFEDRVSLEEAVSQLKTNSRRYAKRQLTWFRNKMDVTWFDVTDGEKTSEILRYIEGKLQLKSNNSK.

Position 14-21 (14-21) interacts with ATP; sequence GPTAVGKT. 16–21 contributes to the substrate binding site; the sequence is TAVGKT. The interaction with substrate tRNA stretch occupies residues 39-42; it reads DSMQ.

The protein belongs to the IPP transferase family. Monomer. Requires Mg(2+) as cofactor.

It carries out the reaction adenosine(37) in tRNA + dimethylallyl diphosphate = N(6)-dimethylallyladenosine(37) in tRNA + diphosphate. Its function is as follows. Catalyzes the transfer of a dimethylallyl group onto the adenine at position 37 in tRNAs that read codons beginning with uridine, leading to the formation of N6-(dimethylallyl)adenosine (i(6)A). This Bacillus cereus (strain ATCC 10987 / NRS 248) protein is tRNA dimethylallyltransferase.